A 358-amino-acid chain; its full sequence is Neuronal-specific septin-3 (358 aa).

A compositionally biased stretch (basic and acidic residues) spans 1-10 (MSKGLPETRT). The tract at residues 1–30 (MSKGLPETRTDAAMSELVPEPRPKPAVPMK) is disordered. One can recognise a Septin-type G domain in the interval 58–331 (TGFDFNIMVV…ETYRAKRLND (274 aa)). Positions 68–75 (GQSGLGKS) are G1 motif. 68 to 75 (GQSGLGKS) is a GTP binding site. At Ser91 the chain carries Phosphoserine. Thr102 is a GTP binding site. The segment at 125-128 (DTPG) is G3 motif. Positions 207 to 210 (AKAD) are G4 motif. GTP contacts are provided by residues 208–216 (KADTMTLEE), Gly265, and Arg280.

This sequence belongs to the TRAFAC class TrmE-Era-EngA-EngB-Septin-like GTPase superfamily. Septin GTPase family. In terms of assembly, septins polymerize into heterooligomeric protein complexes that form filaments, and can associate with cellular membranes, actin filaments and microtubules. GTPase activity is required for filament formation. In terms of processing, phosphorylated by PKG on serine residues. Phosphorylated by PKG on Ser-91. As to expression, brain-specific.

The protein localises to the cytoplasm. It is found in the cytoskeleton. Its subcellular location is the synapse. Its function is as follows. Filament-forming cytoskeletal GTPase. May play a role in cytokinesis (Potential). This is Neuronal-specific septin-3 from Homo sapiens (Human).